A 1404-amino-acid chain; its full sequence is Clustered mitochondria protein homolog (1404 aa).

Residues His-357–Leu-646 form the Clu domain. A compositionally biased stretch (acidic residues) spans Ala-528–Glu-540. 4 disordered regions span residues Ala-528–Ala-561, Asp-706–Asp-735, Gly-996–Thr-1046, and Ser-1337–Thr-1372. A compositionally biased stretch (basic and acidic residues) spans Asp-706 to Ala-723. Low complexity-rich tracts occupy residues Asn-1021–Thr-1046 and Ala-1358–Thr-1372.

This sequence belongs to the CLU family. In terms of assembly, may associate with the eukaryotic translation initiation factor 3 (eIF-3) complex.

It is found in the cytoplasm. Its function is as follows. mRNA-binding protein involved in proper cytoplasmic distribution of mitochondria. The chain is Clustered mitochondria protein homolog from Mycosarcoma maydis (Corn smut fungus).